Here is a 444-residue protein sequence, read N- to C-terminus: MEQVFADWNFEDNFHMSTNKRSIRPEDELVELLWRDGQVVLQSQARREPSVQVQTHKQETLRKPNNIFLDNQETVQKPNYAALDDQETVSWIQYPPDDVIDPFESEFSSHFFSSIDHLGGPEKPRTIEETVKHEAQAMAPPKFRSSVITVGPSHCGSNQSTNIHQATTLPVSMSDRSKNVEERLDTSSGGSSGCSYGRNNKETVSGTSVTIDRKRKHVMDADQESVSQSDIGLTSTDDQTMGNKSSQRSGSTRRSRAAEVHNLSERRRRDRINERMKALQELIPHCSRTDKASILDEAIDYLKSLQMQLQVMWMGSGMAAAAAAAASPMMFPGVQSSPYINQMAMQSQMQLSQFPVMNRSAPQNHPGLVCQNPVQLQLQAQNQILSEQLARYMGGIPQMPPAGNQMQTVQQQPADMLGFGSPAGPQSQLSAPATTDSLHMGKIG.

The involved in interaction with phyB stretch occupies residues 26 to 39 (EDELVELLWRDGQV). 2 disordered regions span residues 154–265 (HCGS…NLSE) and 416–444 (MLGF…GKIG). The span at 155 to 171 (CGSNQSTNIHQATTLPV) shows a compositional bias: polar residues. Residues 175–185 (DRSKNVEERLD) are compositionally biased toward basic and acidic residues. Residues 187 to 197 (SSGGSSGCSYG) show a composition bias toward low complexity. A compositionally biased stretch (polar residues) spans 224-244 (ESVSQSDIGLTSTDDQTMGNK). Basic and acidic residues predominate over residues 256–265 (RAAEVHNLSE). Residues 256-305 (RAAEVHNLSERRRRDRINERMKALQELIPHCSRTDKASILDEAIDYLKSL) enclose the bHLH domain. The span at 424–437 (GPQSQLSAPATTDS) shows a compositional bias: polar residues. A Phosphoserine modification is found at S437.

As to quaternary structure, homodimer. Interacts specifically with the Pfr form of phytochrome B and with TOC1/APRR1. May form a heterodimer with PIF3. Interacts with PHYB, CRY1 and CRY2 in the nucleus in response to low blue light (LBL). Interacts with TOPP4. Associates to PTAC12/HMR/PAP5 which acts as a transcriptional coactivator. Phosphorylated. Additional phosphorylations induced within 60 seconds following phytochrome B photoactivation. In terms of processing, dephosphorylated by TOPP4 during photomorphogenesis, leading to subsequent degradation of PIF5 by the proteasomal pathway. Mainly expressed in leaves and seedlings, and, to a lower extent, in stems, fruits, flowers and roots.

It localises to the nucleus. In terms of biological role, transcription factor acting negatively in the phytochrome B signaling pathway to promote the shade-avoidance response. Regulates PHYB abundance at the post-transcriptional level, possibly via the ubiquitin-proteasome pathway. Promotes ethylene activity in the dark. May regulate the expression of a subset of genes by binding to the G-box motif. Might be involved in the integration of light-signals to control both circadian and photomorphogenic processes. Activated by CRY1 and CRY2 in response to low blue light (LBL) by direct binding at chromatin on E-box variant 5'-CA[CT]GTG-3' to stimulate specific gene expression to adapt global physiology (e.g. hypocotyl elongation in low blue light). This is Transcription factor PIF5 from Arabidopsis thaliana (Mouse-ear cress).